Reading from the N-terminus, the 363-residue chain is Small ribosomal subunit biogenesis GTPase RsgA (363 aa).

The CP-type G domain occupies 112 to 268; the sequence is HQQVIAANID…LIDTPGMREL (157 aa). GTP is bound by residues 157 to 160 and 210 to 218; these read TKAD and GSSGAGKST. Zn(2+) contacts are provided by Cys-291, Cys-296, His-298, and Cys-304. Residues 340 to 363 are disordered; that stretch reads RVAQNNRGKGSGKRPASVDRPGRH.

Belongs to the TRAFAC class YlqF/YawG GTPase family. RsgA subfamily. Monomer. Associates with 30S ribosomal subunit, binds 16S rRNA. Requires Zn(2+) as cofactor.

It localises to the cytoplasm. Functionally, one of several proteins that assist in the late maturation steps of the functional core of the 30S ribosomal subunit. Helps release RbfA from mature subunits. May play a role in the assembly of ribosomal proteins into the subunit. Circularly permuted GTPase that catalyzes slow GTP hydrolysis, GTPase activity is stimulated by the 30S ribosomal subunit. This is Small ribosomal subunit biogenesis GTPase RsgA from Xanthomonas axonopodis pv. citri (strain 306).